Consider the following 39-residue polypeptide: TTVFLADIKSNCPSRVSFQVAALPGARVEIEAIAIQGPI.

Belongs to the RutC family. In terms of assembly, monomer. Post-translationally, the N-terminus may be blocked. As to expression, mainly expressed in the liver and kidney. Lower expression found in intestine, gizzard, glandular stomach, heart, brain and spleen.

It localises to the cytoplasm. In terms of biological role, endoribonuclease responsible for the inhibition of the translation by cleaving mRNA. Inhibits cell-free protein synthesis. Cleaves phosphodiester bonds only in single-stranded RNA. The sequence is that of Ribonuclease UK114 from Gallus gallus (Chicken).